Reading from the N-terminus, the 352-residue chain is Pollen-specific protein SF21 (352 aa).

It belongs to the NDRG family. In terms of tissue distribution, pollen.

This chain is Pollen-specific protein SF21 (SF21), found in Helianthus annuus (Common sunflower).